Reading from the N-terminus, the 300-residue chain is Mycothiol acetyltransferase (300 aa).

N-acetyltransferase domains lie at 4-140 (IDWR…RPLT) and 151-300 (VRLA…AVAD). A 1D-myo-inositol 2-(L-cysteinylamino)-2-deoxy-alpha-D-glucopyranoside-binding site is contributed by aspartate 36. 79-81 (LVV) is a binding site for acetyl-CoA. Positions 178, 219, and 227 each coordinate 1D-myo-inositol 2-(L-cysteinylamino)-2-deoxy-alpha-D-glucopyranoside. Residue 231–233 (VGV) coordinates acetyl-CoA. 1D-myo-inositol 2-(L-cysteinylamino)-2-deoxy-alpha-D-glucopyranoside is bound at residue tyrosine 269. 274-279 (NGAAVK) provides a ligand contact to acetyl-CoA.

This sequence belongs to the acetyltransferase family. MshD subfamily. In terms of assembly, monomer.

It carries out the reaction 1D-myo-inositol 2-(L-cysteinylamino)-2-deoxy-alpha-D-glucopyranoside + acetyl-CoA = mycothiol + CoA + H(+). Catalyzes the transfer of acetyl from acetyl-CoA to desacetylmycothiol (Cys-GlcN-Ins) to form mycothiol. This is Mycothiol acetyltransferase from Mycobacterium sp. (strain JLS).